The chain runs to 213 residues: Ribonuclease Oy (213 aa).

The active site involves His-35. Residues Cys-51 and Cys-96 are joined by a disulfide bond. Asn-52 carries an N-linked (GlcNAc...) asparagine glycan. Catalysis depends on residues Glu-89 and His-93. Residues Asn-121 and Asn-142 are each glycosylated (N-linked (GlcNAc...) asparagine). 2 disulfide bridges follow: Cys-160/Cys-198 and Cys-178/Cys-188.

The protein belongs to the RNase T2 family.

Its subcellular location is the secreted. In terms of biological role, releases mononucleotides from RNA in the order of 3'-GMP, 3'-AMP and 3'-UMP. This chain is Ribonuclease Oy, found in Magallana gigas (Pacific oyster).